We begin with the raw amino-acid sequence, 1051 residues long: Leucine zipper protein 1 (1051 aa).

Ala-2 carries the post-translational modification N-acetylalanine. A coiled-coil region spans residues 11–354 (ASNRHLRFKL…KLQVKKQKEL (344 aa)). 4 disordered regions span residues 247–293 (ISST…KDLN), 374–401 (RTKLKGHGGEVSVSKHTSREQSPQHKRE), 432–554 (AAKA…SQVT), and 569–601 (ASSQRASSEGLSKGKKAANGLETDANFPHSKAP). Residues 254-293 (KESRRKGSLDYLKQVENETRDKSENEKNRNQEDNKVKDLN) show a composition bias toward basic and acidic residues. 8 positions are modified to phosphoserine: Ser-256, Ser-261, Ser-395, Ser-513, Ser-571, Ser-575, Ser-612, and Ser-660. The segment covering 569–578 (ASSQRASSEG) has biased composition (polar residues). The disordered stretch occupies residues 675-727 (VNTTITPEPEPKLQPNSREKVKSRGGTRTPLFENDKNAAVENDSAKSMRSSSN). Thr-680 carries the post-translational modification Phosphothreonine. At Ser-691 the chain carries Phosphoserine. The span at 707–720 (ENDKNAAVENDSAK) shows a compositional bias: basic and acidic residues. Ser-746 carries the post-translational modification Phosphoserine. The span at 789–799 (VTSKVTSSITI) shows a compositional bias: low complexity. Residues 789–837 (VTSKVTSSITIYPSDSSGPRAVPTEAPRERHTSTSNIQVGPPELTSVSN) are disordered. The required for interaction with FLNA stretch occupies residues 834 to 884 (SVSNHISSPLELSIHKHDITLQLTEAERVGDGSPKNRAETVVSRSSILIKP). Phosphoserine is present on Ser-906. Residues 929–938 (RDLKCSEDPP) show a composition bias toward basic and acidic residues. The tract at residues 929-1000 (RDLKCSEDPP…TQSSLTASEV (72 aa)) is disordered. 2 stretches are compositionally biased toward polar residues: residues 946–958 (EATNAYTQRSSTD) and 989–999 (RRTQSSLTASE). Residue Thr-957 is modified to Phosphothreonine. Ser-993 carries the post-translational modification Phosphoserine.

In terms of assembly, component of the CERF-1 ISWI chromatin remodeling complex (also called the CECR2-containing remodeling factor (CERF) complex) at least composed of CECR2 and SMARCA1. Component of the CERF-5 ISWI chromatin remodeling complex at least composed of CECR2 and SMARCA5/SNF2H. LUZP1 is detected as part of the CERF-1 and CERF-5 complexes in embryonic stem (ES) cells where it is involved in complex stabilization but is not detected in the complexes in the testis. Interacts (via C-terminus) with LIMA1/EPLIN; both proteins restrict ciliation and may work together to regulate this process. Interacts with myosin light chain MYL9; the interaction results in inhibition of phosphorylation of MYL9 by DAPK3. Interacts with DAPK3; the interaction is likely to occur throughout the cell cycle and reduces the LUZP1-mediated suppression of MYL9 phosphorylation. Interacts with the chromosomal passenger complex (CPC); CPC kinase activity is required for localization of LUZP1 to the centromere. In terms of tissue distribution, expressed in cerebral cortex, cerebellum, hippocampus and brain stem.

It is found in the cytoplasm. The protein resides in the cytoskeleton. Its subcellular location is the microtubule organizing center. It localises to the centrosome. The protein localises to the cilium basal body. It is found in the midbody. The protein resides in the chromosome. Its subcellular location is the centromere. It localises to the spindle. The protein localises to the stress fiber. It is found in the nucleus. The protein resides in the cell projection. Its subcellular location is the dendrite. It localises to the perikaryon. The protein localises to the cell junction. It is found in the tight junction. In terms of biological role, F-actin cross-linking protein. Stabilizes actin and acts as a negative regulator of primary cilium formation. Positively regulates the phosphorylation of both myosin II and protein phosphatase 1 regulatory subunit PPP1R12A/MYPT1 and promotes the assembly of myosin II stacks within actin stress fibers. Inhibits the phosphorylation of myosin light chain MYL9 by DAPK3 and suppresses the constriction velocity of the contractile ring during cytokinesis. Binds to microtubules and promotes epithelial cell apical constriction by up-regulating levels of diphosphorylated myosin light chain (MLC) through microtubule-dependent inhibition of MLC dephosphorylation by myosin phosphatase. Involved in regulation of cell migration, nuclear size and centriole number, probably through regulation of the actin cytoskeleton. Component of the CERF-1 and CERF-5 chromatin remodeling complexes in embryonic stem cells where it acts to stabilize the complexes. Plays a role in embryonic brain and cardiovascular development. In Rattus norvegicus (Rat), this protein is Leucine zipper protein 1 (Luzp1).